The chain runs to 308 residues: uncharacterized protein (308 aa).

This is an uncharacterized protein from Escherichia coli (strain K12).